A 301-amino-acid chain; its full sequence is Alpha-ketoglutarate-dependent sulfate ester dioxygenase (301 aa).

Substrate is bound at residue histidine 81. Fe cation-binding residues include histidine 108 and aspartate 110. A substrate-binding site is contributed by valine 111. Threonine 135 is a binding site for 2-oxoglutarate. Position 264 (histidine 264) interacts with Fe cation. Positions 275 and 279 each coordinate 2-oxoglutarate.

Belongs to the TfdA dioxygenase family. As to quaternary structure, homotetramer. The cofactor is Fe(2+).

The enzyme catalyses a primary linear alkyl sulfate ester + 2-oxoglutarate + O2 = an aldehyde + sulfate + succinate + CO2 + H(+). It catalyses the reaction 2-ethylhexyl sulfate + 2-oxoglutarate + O2 = 2-ethylhexanal + sulfate + succinate + CO2 + H(+). The catalysed reaction is decyl sulfate + 2-oxoglutarate + O2 = decanal + sulfate + succinate + CO2 + H(+). It carries out the reaction hexyl sulfate + 2-oxoglutarate + O2 = hexanal + sulfate + succinate + CO2 + H(+). The enzyme catalyses nonyl sufate + 2-oxoglutarate + O2 = nonanal + sulfate + succinate + CO2 + H(+). Strongly stimulated by ascorbate. In terms of biological role, catalyzes the oxygenolytic cleavage of 2-ethylhexyl sulfate (2-EHS) in the presence of alpha-ketoglutarate to yield 2-ethyl-hexanal and succinate, the decarboxylated form of alpha-ketoglutarate. It can accept a wide range of alpha-keto acids including 2-oxo-valerate, 2-oxo-adipate, 2-oxo-octanoate, 3-methyl-2-oxo-butyrate, oxaloacetate-alpha-ketoadipate, and alpha-ketooctanoate. It can catalyze the cleavage of medium-chain alkyl sulfate esters such as butylsulfate, pentylsulfate, hexylsulfate, heptylsulfate, octylsulfate, nonylsulfate, decylsulfate and sodium dodecyl sulfate (SDS). The protein is Alpha-ketoglutarate-dependent sulfate ester dioxygenase of Pseudomonas putida (Arthrobacter siderocapsulatus).